A 514-amino-acid polypeptide reads, in one-letter code: MEAHLDQEMILVLDFGGQYNQLITRRIRDLGVYSELHSHKITAAEVKDIAPAGIIFSGGPRSVYAEDAYRCDPEIFDLGIPIFGICYGMQLMSQHFGGTVERAGHREYGKATLTLNDPSPMYANLPLEQTVWMSHSDLVTSVPNGFVVDGTNVSCPIASIKNEELKMYGVQYHPEVNHTMFGKELLKNFLFEVCQCTGDWSMENFIEIEIAKIKEEVGDKKVLCALSGGVDSSVVAALIHAAIGDQLTCMFVDHGLLRKGEAESVMKTFADHFHMNVIKIDAQDRFLNKLKGISDPEQKRKIIGNEFVYVFDEEASKLTDMDFLAQGTLYTDIIESGTDTAQTIKSHHNVGGLPEDMQFKLIEPINTLFKDEVRELGKELGLSDEIVWRQPFPGPGLGIRVLGEITDEKLEIVRESDFILRDEIKKAGLEREIWQYFTVLPPLRSVGVMGDERTYDYAVGIRAVTSIDGMTSDWARIPWDVLEKISVRIVNEVQNVNRVLYDVTSKPPSTIEWE.

A Glutamine amidotransferase type-1 domain is found at Met9–Asp199. The active-site Nucleophile is the Cys86. Active-site residues include His173 and Glu175. Residues Trp200–Arg389 enclose the GMPS ATP-PPase domain. Ser227 to Ser233 contacts ATP.

Homodimer.

It catalyses the reaction XMP + L-glutamine + ATP + H2O = GMP + L-glutamate + AMP + diphosphate + 2 H(+). It participates in purine metabolism; GMP biosynthesis; GMP from XMP (L-Gln route): step 1/1. Functionally, catalyzes the synthesis of GMP from XMP. The polypeptide is GMP synthase [glutamine-hydrolyzing] (Exiguobacterium sibiricum (strain DSM 17290 / CCUG 55495 / CIP 109462 / JCM 13490 / 255-15)).